We begin with the raw amino-acid sequence, 156 residues long: Small ribosomal subunit protein uS7 (156 aa).

Belongs to the universal ribosomal protein uS7 family. In terms of assembly, part of the 30S ribosomal subunit. Contacts proteins S9 and S11.

In terms of biological role, one of the primary rRNA binding proteins, it binds directly to 16S rRNA where it nucleates assembly of the head domain of the 30S subunit. Is located at the subunit interface close to the decoding center, probably blocks exit of the E-site tRNA. The chain is Small ribosomal subunit protein uS7 from Rhodococcus opacus (strain B4).